A 216-amino-acid chain; its full sequence is Thiopurine S-methyltransferase (216 aa).

Positions 11, 46, 67, and 122 each coordinate S-adenosyl-L-methionine.

The protein belongs to the class I-like SAM-binding methyltransferase superfamily. TPMT family.

It localises to the cytoplasm. The enzyme catalyses S-adenosyl-L-methionine + a thiopurine = S-adenosyl-L-homocysteine + a thiopurine S-methylether.. This is Thiopurine S-methyltransferase from Vibrio campbellii (strain ATCC BAA-1116).